Reading from the N-terminus, the 424-residue chain is Dual-specificity RNA methyltransferase RlmN (424 aa).

Glu-132 serves as the catalytic Proton acceptor. In terms of domain architecture, Radical SAM core spans 138-388 (GPDRGTLCVS…VRTPRGRDIL (251 aa)). A disulfide bridge connects residues Cys-145 and Cys-391. 3 residues coordinate [4Fe-4S] cluster: Cys-152, Cys-156, and Cys-159. S-adenosyl-L-methionine is bound by residues 217 to 218 (GE), Ser-249, 271 to 273 (SLH), and Asn-348. The active-site S-methylcysteine intermediate is the Cys-391.

The protein belongs to the radical SAM superfamily. RlmN family. It depends on [4Fe-4S] cluster as a cofactor.

It is found in the cytoplasm. The catalysed reaction is adenosine(2503) in 23S rRNA + 2 reduced [2Fe-2S]-[ferredoxin] + 2 S-adenosyl-L-methionine = 2-methyladenosine(2503) in 23S rRNA + 5'-deoxyadenosine + L-methionine + 2 oxidized [2Fe-2S]-[ferredoxin] + S-adenosyl-L-homocysteine. It catalyses the reaction adenosine(37) in tRNA + 2 reduced [2Fe-2S]-[ferredoxin] + 2 S-adenosyl-L-methionine = 2-methyladenosine(37) in tRNA + 5'-deoxyadenosine + L-methionine + 2 oxidized [2Fe-2S]-[ferredoxin] + S-adenosyl-L-homocysteine. Its function is as follows. Specifically methylates position 2 of adenine 2503 in 23S rRNA and position 2 of adenine 37 in tRNAs. m2A2503 modification seems to play a crucial role in the proofreading step occurring at the peptidyl transferase center and thus would serve to optimize ribosomal fidelity. The protein is Dual-specificity RNA methyltransferase RlmN of Methylobacterium radiotolerans (strain ATCC 27329 / DSM 1819 / JCM 2831 / NBRC 15690 / NCIMB 10815 / 0-1).